Here is a 142-residue protein sequence, read N- to C-terminus: Large ribosomal subunit protein uL11 (142 aa).

This sequence belongs to the universal ribosomal protein uL11 family. As to quaternary structure, part of the ribosomal stalk of the 50S ribosomal subunit. Interacts with L10 and the large rRNA to form the base of the stalk. L10 forms an elongated spine to which L12 dimers bind in a sequential fashion forming a multimeric L10(L12)X complex. In terms of processing, one or more lysine residues are methylated.

Functionally, forms part of the ribosomal stalk which helps the ribosome interact with GTP-bound translation factors. The chain is Large ribosomal subunit protein uL11 from Alcanivorax borkumensis (strain ATCC 700651 / DSM 11573 / NCIMB 13689 / SK2).